The primary structure comprises 452 residues: Gastrin/cholecystokinin type B receptor (452 aa).

The segment at 1–21 is disordered; sequence MELLKLNRSVQGPGPGSGSSL. At 1–57 the chain is on the extracellular side; the sequence is MELLKLNRSVQGPGPGSGSSLCRPGVSLLNSSSAGNLSCDPPRIRGTGTRELEMAIR. 3 N-linked (GlcNAc...) asparagine glycosylation sites follow: Asn7, Asn30, and Asn36. The helical transmembrane segment at 58 to 79 threads the bilayer; it reads ITLYAVIFLMSVGGNVLIIVVL. Residues 80 to 87 lie on the Cytoplasmic side of the membrane; the sequence is GLSRRLRT. A helical membrane pass occupies residues 88-109; the sequence is VTNAFLLSLAVSDLLLAVACMP. Topologically, residues 110-131 are extracellular; it reads FTLLPNLMGTFIFGTVICKAIS. Cys127 and Cys205 are disulfide-bonded. Residues 132-150 traverse the membrane as a helical segment; the sequence is YLMGVSVSVSTLNLVAIAL. The Cytoplasmic segment spans residues 151–170; sequence ERYSAICRPLQARVWQTRSH. The chain crosses the membrane as a helical span at residues 171–189; it reads AARVILATWLLSGLLMVPY. Over 190–219 the chain is Extracellular; it reads PVYTMVQPVGPRVLQCMHRWPSARVQQTWS. The helical transmembrane segment at 220 to 242 threads the bilayer; it reads VLLLLLLFFIPGVVIAVAYGLIS. The Cytoplasmic portion of the chain corresponds to 243-338; it reads RELYLGLHFD…KLLAKKRVVR (96 aa). A disordered region spans residues 257 to 286; that stretch reads SETQSRARNQGGLPGGAAPGPVHQNGGCRP. The chain crosses the membrane as a helical span at residues 339-360; that stretch reads MLLVIVLLFFLCWLPVYSVNTW. Residues 361–378 lie on the Extracellular side of the membrane; it reads RAFDGPGAQRALSGAPIS. The helical transmembrane segment at 379–399 threads the bilayer; sequence FIHLLSYVSACVNPLVYCFMH. Residues 400 to 452 are Cytoplasmic-facing; sequence RRFRQACLDTCARCCPRPPRARPQPLPDEDPPTPSIASLSRLSYTTISTLGPG. Cys413 carries the S-palmitoyl cysteine lipid modification. Positions 421–452 are disordered; the sequence is RPQPLPDEDPPTPSIASLSRLSYTTISTLGPG. The span at 434–452 shows a compositional bias: polar residues; the sequence is SIASLSRLSYTTISTLGPG.

The protein belongs to the G-protein coupled receptor 1 family. Parietal cells, pancreas, brain and various neoplastic tissues.

It localises to the cell membrane. Its function is as follows. Receptor for gastrin and cholecystokinin. The CCK-B receptors occur throughout the central nervous system where they modulate anxiety, analgesia, arousal, and neuroleptic activity. This receptor mediates its action by association with G proteins that activate a phosphatidylinositol-calcium second messenger system. The sequence is that of Gastrin/cholecystokinin type B receptor (Cckbr) from Rattus norvegicus (Rat).